A 139-amino-acid polypeptide reads, in one-letter code: D-ribose pyranase (139 aa).

H20 (proton donor) is an active-site residue. Substrate contacts are provided by residues D28, H106, and Y128–N130.

It belongs to the RbsD / FucU family. RbsD subfamily. As to quaternary structure, homodecamer.

The protein resides in the cytoplasm. It catalyses the reaction beta-D-ribopyranose = beta-D-ribofuranose. It functions in the pathway carbohydrate metabolism; D-ribose degradation; D-ribose 5-phosphate from beta-D-ribopyranose: step 1/2. Catalyzes the interconversion of beta-pyran and beta-furan forms of D-ribose. This is D-ribose pyranase from Shewanella halifaxensis (strain HAW-EB4).